A 174-amino-acid chain; its full sequence is Large ribosomal subunit protein uL10 (174 aa).

This sequence belongs to the universal ribosomal protein uL10 family. In terms of assembly, part of the ribosomal stalk of the 50S ribosomal subunit. The N-terminus interacts with L11 and the large rRNA to form the base of the stalk. The C-terminus forms an elongated spine to which L12 dimers bind in a sequential fashion forming a multimeric L10(L12)X complex.

In terms of biological role, forms part of the ribosomal stalk, playing a central role in the interaction of the ribosome with GTP-bound translation factors. The protein is Large ribosomal subunit protein uL10 of Methylobacillus flagellatus (strain ATCC 51484 / DSM 6875 / VKM B-1610 / KT).